The sequence spans 418 residues: Sterigmatocystin 8-O-methyltransferase (418 aa).

A propeptide spanning residues 1 to 41 (MTLPNKAALVGLAHTLSEQVKRYLVTADETKSPEDHKLCIE) is cleaved from the precursor. 170–176 (MRSAAYF) contacts substrate. The interval 206-225 (LFDYYSTVDEVRGRRFDLGM) is substrate binding. S-adenosyl-L-methionine is bound by residues 254–255 (GG), Asp277, 297–298 (DI), and Arg313. His317 serves as the catalytic Proton acceptor.

Belongs to the class I-like SAM-binding methyltransferase superfamily. Cation-independent O-methyltransferase family. COMT subfamily.

The enzyme catalyses sterigmatocystin + S-adenosyl-L-methionine = 8-O-methylsterigmatocystin + S-adenosyl-L-homocysteine + H(+). It carries out the reaction dihydrosterigmatocystin + S-adenosyl-L-methionine = 8-O-methyldihydrosterigmatocystin + S-adenosyl-L-homocysteine + H(+). It functions in the pathway mycotoxin biosynthesis; aflatoxin biosynthesis. Its function is as follows. Involved in the conversion of sterigmatocystin to O-methylsterigmatocystin (OMST) and dihydrosterigmatocystin to dihydro-o-methylsterigmatocystin in the aflatoxin biosynthesis pathway. The polypeptide is Sterigmatocystin 8-O-methyltransferase (omtA) (Aspergillus flavus (strain ATCC 200026 / FGSC A1120 / IAM 13836 / NRRL 3357 / JCM 12722 / SRRC 167)).